Consider the following 157-residue polypeptide: Small ribosomal subunit protein uS7 (157 aa).

The protein belongs to the universal ribosomal protein uS7 family. In terms of assembly, part of the 30S ribosomal subunit. Contacts proteins S9 and S11.

Its function is as follows. One of the primary rRNA binding proteins, it binds directly to 16S rRNA where it nucleates assembly of the head domain of the 30S subunit. Is located at the subunit interface close to the decoding center, probably blocks exit of the E-site tRNA. The sequence is that of Small ribosomal subunit protein uS7 from Francisella tularensis subsp. holarctica (strain OSU18).